A 443-amino-acid chain; its full sequence is UDP-N-acetylmuramate--L-alanine ligase (443 aa).

110-116 contacts ATP; that stretch reads GAHGKTS.

This sequence belongs to the MurCDEF family.

Its subcellular location is the cytoplasm. The catalysed reaction is UDP-N-acetyl-alpha-D-muramate + L-alanine + ATP = UDP-N-acetyl-alpha-D-muramoyl-L-alanine + ADP + phosphate + H(+). Its pathway is cell wall biogenesis; peptidoglycan biosynthesis. Its function is as follows. Cell wall formation. In Streptococcus agalactiae serotype Ia (strain ATCC 27591 / A909 / CDC SS700), this protein is UDP-N-acetylmuramate--L-alanine ligase.